The chain runs to 404 residues: Argininosuccinate synthase (404 aa).

ATP contacts are provided by residues 13–21 (AYSGGLDTS) and alanine 41. 2 residues coordinate L-citrulline: tyrosine 93 and serine 98. Glycine 123 is an ATP binding site. Residues threonine 125, asparagine 129, and aspartate 130 each coordinate L-aspartate. Asparagine 129 lines the L-citrulline pocket. Residues arginine 133, serine 182, serine 191, glutamate 267, and tyrosine 279 each coordinate L-citrulline.

It belongs to the argininosuccinate synthase family. Type 1 subfamily. As to quaternary structure, homotetramer.

The protein resides in the cytoplasm. It carries out the reaction L-citrulline + L-aspartate + ATP = 2-(N(omega)-L-arginino)succinate + AMP + diphosphate + H(+). It functions in the pathway amino-acid biosynthesis; L-arginine biosynthesis; L-arginine from L-ornithine and carbamoyl phosphate: step 2/3. The sequence is that of Argininosuccinate synthase from Moritella profunda.